Here is a 634-residue protein sequence, read N- to C-terminus: DNA gyrase subunit B (634 aa).

The segment at 1–220 (MSYDASAIRV…EEVFLDKGGV (220 aa)) is ATPase domain. The transducer domain stretch occupies residues 221–390 (ASFAKALAEG…EAARKARELV (170 aa)). Positions 416 to 534 (AELFIVEGDS…RGHVYIAQPP (119 aa)) constitute a Toprim domain. The Mg(2+) site is built by Glu422, Asp499, and Asp501.

This sequence belongs to the type II topoisomerase GyrB family. In terms of assembly, heterotetramer, composed of two GyrA and two GyrB chains. Non-hydrolyzable ATP analogs induce dimerization, novobiocin also induces a small amount of dimerization. The two subunits form an intertwined dimer where the GyrB ATPase transducer helix of 1 subunit connects to the Toprim domain of the other GyrB subunit through a 10 residue linker. In the heterotetramer, GyrA contains the active site tyrosine that forms a covalent intermediate with the DNA, while GyrB binds cofactors and catalyzes ATP hydrolysis. It depends on Mg(2+) as a cofactor. Mn(2+) is required as a cofactor. Requires Ca(2+) as cofactor.

It is found in the cytoplasm. It carries out the reaction ATP-dependent breakage, passage and rejoining of double-stranded DNA.. Functionally, a type II topoisomerase that negatively supercoils closed circular double-stranded (ds) DNA in an ATP-dependent manner. It probably also catalyzes the interconversion of other topological isomers of double-stranded DNA rings, including catenanes. Relaxes negatively supercoiled DNA in an ATP-independent manner. At comparable concentrations T.thermophilus gyrase does not introduce as many negative supercoils into DNA as the E.coli enzyme. Negative supercoiling favors strand separation, and DNA replication, transcription, recombination and repair, all of which involve strand separation. Type II topoisomerases break and join 2 DNA strands simultaneously in an ATP-dependent manner. This Thermus thermophilus (strain ATCC 27634 / DSM 579 / HB8) protein is DNA gyrase subunit B.